Reading from the N-terminus, the 122-residue chain is Iron-sulfur cluster insertion protein ErpA (122 aa).

Residues cysteine 50, cysteine 114, and cysteine 116 each contribute to the iron-sulfur cluster site.

The protein belongs to the HesB/IscA family. Homodimer. Requires iron-sulfur cluster as cofactor.

Functionally, required for insertion of 4Fe-4S clusters for at least IspG. The protein is Iron-sulfur cluster insertion protein ErpA of Alkalilimnicola ehrlichii (strain ATCC BAA-1101 / DSM 17681 / MLHE-1).